Reading from the N-terminus, the 151-residue chain is Small ribosomal subunit protein uS19 (151 aa).

Residues 1-23 (MVVNKQGSVKSIKRKARKSRKVT) are disordered. Residues 11–23 (SIKRKARKSRKVT) are compositionally biased toward basic residues.

This sequence belongs to the universal ribosomal protein uS19 family.

Functionally, protein S19 forms a complex with S13 that binds strongly to the 16S ribosomal RNA. This chain is Small ribosomal subunit protein uS19 (rps19), found in Thermoplasma volcanium (strain ATCC 51530 / DSM 4299 / JCM 9571 / NBRC 15438 / GSS1).